Reading from the N-terminus, the 67-residue chain is Phycobilisome 7.8 kDa linker polypeptide, allophycocyanin-associated, core (67 aa).

One can recognise a CpcD-like domain in the interval 1 to 56 (MRVFKVTACVPSQTRIRTQRELQNTYFTKLVPYDNWFREQQRIMKMGGKIVKVELA).

Belongs to the phycobilisome linker protein family.

It is found in the cellular thylakoid membrane. Its function is as follows. Rod linker protein, associated with allophycocyanin. Linker polypeptides determine the state of aggregation and the location of the disk-shaped phycobiliprotein units within the phycobilisome and modulate their spectroscopic properties in order to mediate a directed and optimal energy transfer. In Arthrospira platensis (Spirulina platensis), this protein is Phycobilisome 7.8 kDa linker polypeptide, allophycocyanin-associated, core (apcC).